Here is a 195-residue protein sequence, read N- to C-terminus: Putative L(+)-tartrate dehydratase subunit beta (195 aa).

Residue His-36 is part of the active site. Substrate is bound at residue Lys-104.

It belongs to the class-I fumarase family. As to quaternary structure, heterotetramer of two alpha and two beta subunits.

The enzyme catalyses (2R,3R)-tartrate = oxaloacetate + H2O. The chain is Putative L(+)-tartrate dehydratase subunit beta from Methanocaldococcus jannaschii (strain ATCC 43067 / DSM 2661 / JAL-1 / JCM 10045 / NBRC 100440) (Methanococcus jannaschii).